A 340-amino-acid polypeptide reads, in one-letter code: DnaJ homolog subfamily C member 22 (340 aa).

A TM2 domain is found at 1 to 50 (MGKSLLAAYGLWALGGPLGLYHIYLGRDSHALLWMLTLGGFGMGWMWDFW). Transmembrane regions (helical) follow at residues 5 to 25 (LLAAYGLWALGGPLGLYHIYL), 30 to 50 (HALLWMLTLGGFGMGWMWDFW), 81 to 101 (FIGQVATGIYFGIVAAIGLSF), 105 to 125 (FHMVVLPLAVALGVHLVATVG), 135 to 155 (LIAAFLTSPIFYGRAVSMIPI), 186 to 206 (IGLVYLAFTGPLAYSALLNTS), and 212 to 232 (VAGSIGSMLEWLSIFPSISAL). Residues 278–340 (MACKVLGVNF…LMRLRKSKTL (63 aa)) form the J domain.

Its subcellular location is the membrane. May function as a co-chaperone. The sequence is that of DnaJ homolog subfamily C member 22 (dnajc22) from Xenopus tropicalis (Western clawed frog).